Reading from the N-terminus, the 635-residue chain is 1-deoxy-D-xylulose-5-phosphate synthase (635 aa).

Thiamine diphosphate contacts are provided by residues His72 and 113-115 (GHA). Asp144 lines the Mg(2+) pocket. Residues 145 to 146 (GA), Asn174, Tyr287, and Glu370 contribute to the thiamine diphosphate site. Asn174 contributes to the Mg(2+) binding site.

The protein belongs to the transketolase family. DXPS subfamily. As to quaternary structure, homodimer. It depends on Mg(2+) as a cofactor. The cofactor is thiamine diphosphate.

It catalyses the reaction D-glyceraldehyde 3-phosphate + pyruvate + H(+) = 1-deoxy-D-xylulose 5-phosphate + CO2. It participates in metabolic intermediate biosynthesis; 1-deoxy-D-xylulose 5-phosphate biosynthesis; 1-deoxy-D-xylulose 5-phosphate from D-glyceraldehyde 3-phosphate and pyruvate: step 1/1. Functionally, catalyzes the acyloin condensation reaction between C atoms 2 and 3 of pyruvate and glyceraldehyde 3-phosphate to yield 1-deoxy-D-xylulose-5-phosphate (DXP). This chain is 1-deoxy-D-xylulose-5-phosphate synthase, found in Trichodesmium erythraeum (strain IMS101).